Reading from the N-terminus, the 329-residue chain is MNSETLPAELPATLTIASRESRLAMWQAEHVRDALRKLYPACDVKILGMTTRGDQILDRTLSKVGGKGLFVKELESALADGRADLAVHSLKDVPMALPEGFALAAVMSREDPRDAFVSNDYASLDALPAGAVVGTSSLRREAMLRARHPRLDVRPLRGNLDTRLAKLDRGDYAAIILAAAGLKRLGLAARIRALLDVDDSLPAAGQGALGIEIAARRADVAAWLAPLHDHASALAVEAERAVSRALGGSCEVPLAAHAVWRGGELHLTGSVSTTDGARVLAAHAHARAATAADALALGRRVSDALERQGARAIVDALVAASAQAQKGGA.

Cys-250 carries the S-(dipyrrolylmethanemethyl)cysteine modification.

It belongs to the HMBS family. As to quaternary structure, monomer. Dipyrromethane serves as cofactor.

It carries out the reaction 4 porphobilinogen + H2O = hydroxymethylbilane + 4 NH4(+). It functions in the pathway porphyrin-containing compound metabolism; protoporphyrin-IX biosynthesis; coproporphyrinogen-III from 5-aminolevulinate: step 2/4. Tetrapolymerization of the monopyrrole PBG into the hydroxymethylbilane pre-uroporphyrinogen in several discrete steps. The sequence is that of Porphobilinogen deaminase from Burkholderia mallei (strain NCTC 10247).